Consider the following 673-residue polypeptide: Clotting factor G alpha subunit (673 aa).

An N-terminal signal peptide occupies residues 1–19 (MLVLLCCVVLHVGVARICC). The GH16 domain maps to 27–257 (LVWSDEFTNG…YVRVYQDAST (231 aa)). Catalysis depends on glutamate 137, which acts as the Nucleophile. The active-site Proton donor is glutamate 142. N-linked (GlcNAc...) asparagine glycosylation occurs at asparagine 186. The region spanning 266 to 404 (LDGYYFVQNR…NQLSGQWKLI (139 aa)) is the Ricin B-type lectin domain. CBM6 domains are found at residues 411–533 (KLIQ…IKIT) and 549–671 (KLIQ…IRIT).

This sequence belongs to the glycosyl hydrolase 16 family. Clotting factor G is a heterodimer composed of two non-covalently associated subunits, alpha and beta. In terms of processing, in presence of (1-&gt;3)-beta-glucan, proteolytically cleaved into a 55kDa and a 17kDa forms. Expressed in hemocytes (at protein level).

Component of the heterodimer clotting factor G which may play a role in defense mechanisms against fungi. Initiates a (1-&gt;3)-beta-glucan-sensing clotting pathway whereby the alpha subunit binds to glucans containing (1-&gt;3)-beta linkages, which are components of the fungal cell wall, and the beta subunit catalyzes the activation of proclotting enzyme. The polypeptide is Clotting factor G alpha subunit (Tachypleus tridentatus (Japanese horseshoe crab)).